A 339-amino-acid polypeptide reads, in one-letter code: Ornithine carbamoyltransferase (339 aa).

Residues 56–59, arginine 107, and 134–137 each bind carbamoyl phosphate; these read STRT and HPTQ. Residues asparagine 168, aspartate 232, and 236–237 each bind L-ornithine; that span reads SM. Carbamoyl phosphate is bound by residues 274–275 and arginine 320; that span reads CL.

This sequence belongs to the aspartate/ornithine carbamoyltransferase superfamily. OTCase family.

Its subcellular location is the cytoplasm. The enzyme catalyses carbamoyl phosphate + L-ornithine = L-citrulline + phosphate + H(+). Its pathway is amino-acid biosynthesis; L-arginine biosynthesis; L-arginine from L-ornithine and carbamoyl phosphate: step 1/3. In terms of biological role, reversibly catalyzes the transfer of the carbamoyl group from carbamoyl phosphate (CP) to the N(epsilon) atom of ornithine (ORN) to produce L-citrulline. This chain is Ornithine carbamoyltransferase, found in Buchnera aphidicola subsp. Baizongia pistaciae (strain Bp).